Consider the following 247-residue polypeptide: uncharacterized protein (247 aa).

The N-terminal stretch at 1–35 (MWGPGVTAEGLSVAPAPPPLLPLLLLLALALVAPS) is a signal peptide. A glycan (N-linked (GlcNAc...) asparagine) is linked at Asn57. Residues 82-102 (LSGLLILLVLFAIGYFLQRII) traverse the membrane as a helical segment. The interval 109–179 (YPRGQARPGQ…GGRSDPSCAS (71 aa)) is disordered. The span at 160–172 (SGGGGRGRGGGGR) shows a compositional bias: gly residues.

It localises to the membrane. This is an uncharacterized protein from Homo sapiens (Human).